The chain runs to 91 residues: uncharacterized protein (91 aa).

This is an uncharacterized protein from Vaccinia virus (strain Copenhagen) (VACV).